We begin with the raw amino-acid sequence, 357 residues long: Protein pelota homolog (357 aa).

The protein belongs to the eukaryotic release factor 1 family. Pelota subfamily. In terms of assembly, monomer. A divalent metal cation serves as cofactor.

The protein resides in the cytoplasm. Its function is as follows. May function in recognizing stalled ribosomes, interact with stem-loop structures in stalled mRNA molecules, and effect endonucleolytic cleavage of the mRNA. May play a role in the release non-functional ribosomes and degradation of damaged mRNAs. Has endoribonuclease activity. This Methanocella arvoryzae (strain DSM 22066 / NBRC 105507 / MRE50) protein is Protein pelota homolog.